A 350-amino-acid chain; its full sequence is Phosphoribosylformylglycinamidine cyclo-ligase (350 aa).

This sequence belongs to the AIR synthase family.

It localises to the cytoplasm. The enzyme catalyses 2-formamido-N(1)-(5-O-phospho-beta-D-ribosyl)acetamidine + ATP = 5-amino-1-(5-phospho-beta-D-ribosyl)imidazole + ADP + phosphate + H(+). Its pathway is purine metabolism; IMP biosynthesis via de novo pathway; 5-amino-1-(5-phospho-D-ribosyl)imidazole from N(2)-formyl-N(1)-(5-phospho-D-ribosyl)glycinamide: step 2/2. This is Phosphoribosylformylglycinamidine cyclo-ligase from Cupriavidus necator (strain ATCC 17699 / DSM 428 / KCTC 22496 / NCIMB 10442 / H16 / Stanier 337) (Ralstonia eutropha).